The following is a 136-amino-acid chain: Frataxin, mitochondrial (136 aa).

Belongs to the frataxin family. As to quaternary structure, monomer. Oligomer.

Its subcellular location is the mitochondrion. The enzyme catalyses 4 Fe(2+) + O2 + 4 H(+) = 4 Fe(3+) + 2 H2O. Promotes the biosynthesis of heme as well as the assembly and repair of iron-sulfur clusters by delivering Fe(2+) to proteins involved in these pathways. May play a role in the protection against iron-catalyzed oxidative stress through its ability to catalyze the oxidation of Fe(2+) to Fe(3+). May be able to store large amounts of the metal in the form of a ferrihydrite mineral by oligomerization. This chain is Frataxin, mitochondrial (frh-1), found in Caenorhabditis elegans.